Consider the following 745-residue polypeptide: Serine/threonine-protein kinase BUR1 (745 aa).

The interval 1–21 (MSVIAGHHVPRSNDQRQYDTP) is disordered. One can recognise a Protein kinase domain in the interval 44–349 (YEVIEKLGQG…ALDALNHKFF (306 aa)). ATP-binding positions include 50 to 58 (LGQGTFGVV) and Lys73. Asp179 functions as the Proton acceptor in the catalytic mechanism. Composition is skewed to basic and acidic residues over residues 380-406 (DKEQ…RYNA), 428-475 (DYID…DIQN), and 493-508 (KLRE…KKYD). The disordered stretch occupies residues 380-701 (DKEQAVSELK…EVSDLEEDSD (322 aa)). Residues 516 to 534 (SRGSKSPSPSKLSSISQSK) show a composition bias toward low complexity. Positions 547 to 557 (ASRESSLERKQ) are enriched in basic and acidic residues. 2 stretches are compositionally biased toward polar residues: residues 558 to 567 (VSNGIRTTTD) and 586 to 598 (LTSN…PTRN). Residues 599–631 (KSVERPKDLEKPTNGVTEDRNKKPVLEEKKEVV) are compositionally biased toward basic and acidic residues. A compositionally biased stretch (low complexity) spans 632–660 (KPNLAIPKIKKSSSLVSLSSRSSTTPVIS). The segment covering 661-674 (NPSKVTKRAASSVT) has biased composition (polar residues). Over residues 692–701 (EVSDLEEDSD) the composition is skewed to acidic residues.

This sequence belongs to the protein kinase superfamily. CMGC Ser/Thr protein kinase family. CDC2/CDKX subfamily.

It is found in the nucleus. The catalysed reaction is L-seryl-[protein] + ATP = O-phospho-L-seryl-[protein] + ADP + H(+). The enzyme catalyses L-threonyl-[protein] + ATP = O-phospho-L-threonyl-[protein] + ADP + H(+). It carries out the reaction [DNA-directed RNA polymerase] + ATP = phospho-[DNA-directed RNA polymerase] + ADP + H(+). Functionally, serine/threonine-protein kinase involved in transcription regulation. Phosphorylates the UBC2/RAD6 ubiquitin-conjugating enzyme (E2), leading to monoubiquitination of histone H2B and the silencing of telomeric-associated genes. Also required for histone H3 methylation. Necessary for the recovery from pheromone-induced growth arrest in the cell cycle G1 phase. Required for pseudohyphal growth and virulence in mice. The sequence is that of Serine/threonine-protein kinase BUR1 (CRK1) from Candida albicans (strain SC5314 / ATCC MYA-2876) (Yeast).